Here is a 353-residue protein sequence, read N- to C-terminus: uncharacterized protein (353 aa).

This is an uncharacterized protein from Caenorhabditis elegans.